We begin with the raw amino-acid sequence, 424 residues long: Protein ImpB (424 aa).

Residues 2–189 (FALADINSFY…QPVGEVWGVG (188 aa)) enclose the UmuC domain.

This sequence belongs to the DNA polymerase type-Y family.

Involved in UV protection and mutation. The polypeptide is Protein ImpB (impB) (Salmonella typhimurium).